The chain runs to 176 residues: Large ribosomal subunit protein uL15 (176 aa).

A compositionally biased stretch (basic and acidic residues) spans 1–13 (MKLNDLRDNEGAR). 2 disordered regions span residues 1 to 48 (MKLN…AIKG) and 151 to 176 (IPAA…AKAE). A compositionally biased stretch (gly residues) spans 21-35 (RGIGSGKGKTGGRGQ). The span at 156 to 176 (PEHEKKAARSEANKKAKAKAE) shows a compositional bias: basic and acidic residues.

This sequence belongs to the universal ribosomal protein uL15 family. Part of the 50S ribosomal subunit.

Functionally, binds to the 23S rRNA. The sequence is that of Large ribosomal subunit protein uL15 from Erythrobacter litoralis (strain HTCC2594).